We begin with the raw amino-acid sequence, 396 residues long: 1-deoxy-D-xylulose 5-phosphate reductoisomerase (396 aa).

Positions 13, 14, 15, 16, and 127 each coordinate NADPH. Lys-128 is a binding site for 1-deoxy-D-xylulose 5-phosphate. Glu-129 lines the NADPH pocket. Asp-153 is a binding site for Mn(2+). The 1-deoxy-D-xylulose 5-phosphate site is built by Ser-154, Glu-155, Ser-184, and His-207. Mn(2+) is bound at residue Glu-155. NADPH is bound at residue Gly-213. Residues Ser-220, Asn-225, Lys-226, and Glu-229 each coordinate 1-deoxy-D-xylulose 5-phosphate. Glu-229 is a binding site for Mn(2+).

It belongs to the DXR family. Mg(2+) serves as cofactor. The cofactor is Mn(2+).

It carries out the reaction 2-C-methyl-D-erythritol 4-phosphate + NADP(+) = 1-deoxy-D-xylulose 5-phosphate + NADPH + H(+). The protein operates within isoprenoid biosynthesis; isopentenyl diphosphate biosynthesis via DXP pathway; isopentenyl diphosphate from 1-deoxy-D-xylulose 5-phosphate: step 1/6. In terms of biological role, catalyzes the NADPH-dependent rearrangement and reduction of 1-deoxy-D-xylulose-5-phosphate (DXP) to 2-C-methyl-D-erythritol 4-phosphate (MEP). The protein is 1-deoxy-D-xylulose 5-phosphate reductoisomerase of Pseudomonas aeruginosa (strain UCBPP-PA14).